Consider the following 395-residue polypeptide: Pyruvate synthase subunit PorA (395 aa).

As to quaternary structure, heterotetramer of one alpha, one beta, one delta and one gamma chain.

It catalyses the reaction 2 oxidized [2Fe-2S]-[ferredoxin] + pyruvate + CoA = 2 reduced [2Fe-2S]-[ferredoxin] + acetyl-CoA + CO2 + H(+). The polypeptide is Pyruvate synthase subunit PorA (porA) (Pyrococcus abyssi (strain GE5 / Orsay)).